We begin with the raw amino-acid sequence, 182 residues long: ATP-dependent protease subunit HslV (182 aa).

The active site involves T10. Residues A166, C169, and S172 each contribute to the Na(+) site.

The protein belongs to the peptidase T1B family. HslV subfamily. In terms of assembly, a double ring-shaped homohexamer of HslV is capped on each side by a ring-shaped HslU homohexamer. The assembly of the HslU/HslV complex is dependent on binding of ATP.

It localises to the cytoplasm. The enzyme catalyses ATP-dependent cleavage of peptide bonds with broad specificity.. Allosterically activated by HslU binding. Its function is as follows. Protease subunit of a proteasome-like degradation complex believed to be a general protein degrading machinery. This Rickettsia africae (strain ESF-5) protein is ATP-dependent protease subunit HslV.